The following is a 91-amino-acid chain: UPF0250 protein Lcho_4239 (91 aa).

Belongs to the UPF0250 family.

The polypeptide is UPF0250 protein Lcho_4239 (Leptothrix cholodnii (strain ATCC 51168 / LMG 8142 / SP-6) (Leptothrix discophora (strain SP-6))).